Here is a 382-residue protein sequence, read N- to C-terminus: tRNA(Ile)-lysidine synthase (382 aa).

Position 50-55 (50-55 (SGGRDS)) interacts with ATP.

The protein belongs to the tRNA(Ile)-lysidine synthase family.

It localises to the cytoplasm. It carries out the reaction cytidine(34) in tRNA(Ile2) + L-lysine + ATP = lysidine(34) in tRNA(Ile2) + AMP + diphosphate + H(+). In terms of biological role, ligates lysine onto the cytidine present at position 34 of the AUA codon-specific tRNA(Ile) that contains the anticodon CAU, in an ATP-dependent manner. Cytidine is converted to lysidine, thus changing the amino acid specificity of the tRNA from methionine to isoleucine. This Bifidobacterium animalis subsp. lactis (strain AD011) protein is tRNA(Ile)-lysidine synthase.